Reading from the N-terminus, the 559-residue chain is MKSICCVLVLCLLLCRRSTASESICELKDVSGNSNDWIVLREKPLGCWTDFQTENGTEVHIINLEDNPSVFTVNLLKANKSVVIFTSSSAQSSHAMLFDNPAVSIYVTNKTSLTFIHPTQKPLQILTAPPAGNVSAVLRWAAETFGGVTSVTNARNPKTITFTGVKGSQNSSRCELMPETPTEKPFIHLELNEPIEALKSCYMKHEGEKLHIINIPDGVTIRHVSVHLLSDCNVVLRGPAGTHWIIKNSLRIGILSNNQIHLQSFPLRPRMAISDNPTDIRQKALSYFSSGFISSYSEIRLNVTNVELWITDYSISSAPTEVEKTTPSPTSPPFPVQMQLFSSPDFTTPIDNNSRVLSDKRVYAEISSQTFREASIRVSSCWVRSTPVTREMPFREEPCFIKDCPKRLSFSFQILQDLPAGSWDLECAVKLCGVKRINNEESCTSETPVKRNVQVKPFTPTTNSCFEFGLSAVLGIAFGGFLIGVLLTGALWFIKIRTGHPVALGMRSTAAELSVLSISGCPCGLTKRQPVPTHPSPSENSSANASIGSTQSTPTSSMA.

An N-terminal signal peptide occupies residues 1–20 (MKSICCVLVLCLLLCRRSTA). Over 21 to 473 (SESICELKDV…SCFEFGLSAV (453 aa)) the chain is Extracellular. 2 disulfides stabilise this stretch: Cys25–Cys201 and Cys47–Cys174. Asn55, Asn79, Asn109, Asn133, Asn170, Asn302, and Asn352 each carry an N-linked (GlcNAc...) asparagine glycan. Cys381 and Cys427 are oxidised to a cystine. The chain crosses the membrane as a helical span at residues 474–494 (LGIAFGGFLIGVLLTGALWFI). The Cytoplasmic portion of the chain corresponds to 495–559 (KIRTGHPVAL…TQSTPTSSMA (65 aa)). A disordered region spans residues 528 to 559 (RQPVPTHPSPSENSSANASIGSTQSTPTSSMA). Residues 536–546 (SPSENSSANAS) are compositionally biased toward low complexity. Polar residues predominate over residues 547–559 (IGSTQSTPTSSMA).

In terms of assembly, homodimer; disulfide-linked.

Its subcellular location is the cell membrane. Its function is as follows. Vascular endothelium glycoprotein that plays an important role in the regulation of angiogenesis. Required for normal structure and integrity of adult vasculature. Important for endothelial cell shape changes in response to blood flow, which drive vascular remodeling and establishment of normal vascular morphology during angiogenesis. The protein is Endoglin of Danio rerio (Zebrafish).